Reading from the N-terminus, the 166-residue chain is Small ribosomal subunit protein uS5 (166 aa).

In terms of domain architecture, S5 DRBM spans 11-74; sequence LQEKLVQVNR…EAARKNMVDV (64 aa).

It belongs to the universal ribosomal protein uS5 family. As to quaternary structure, part of the 30S ribosomal subunit. Contacts proteins S4 and S8.

Functionally, with S4 and S12 plays an important role in translational accuracy. Its function is as follows. Located at the back of the 30S subunit body where it stabilizes the conformation of the head with respect to the body. In Marinobacter nauticus (strain ATCC 700491 / DSM 11845 / VT8) (Marinobacter aquaeolei), this protein is Small ribosomal subunit protein uS5.